We begin with the raw amino-acid sequence, 145 residues long: Superoxide dismutase [Mn/Fe] (145 aa).

Residues H10 and H64 each contribute to the Fe(3+) site. The Mn(2+) site is built by H10 and H64.

Belongs to the iron/manganese superoxide dismutase family. Mn(2+) serves as cofactor. The cofactor is Fe(3+).

The enzyme catalyses 2 superoxide + 2 H(+) = H2O2 + O2. Destroys superoxide anion radicals which are normally produced within the cells and which are toxic to biological systems. Catalyzes the dismutation of superoxide anion radicals into O2 and H2O2 by successive reduction and oxidation of the transition metal ion at the active site. This Streptococcus iniae (Streptococcus shiloi) protein is Superoxide dismutase [Mn/Fe] (sodA).